A 394-amino-acid chain; its full sequence is Aromatic-amino-acid aminotransferase (394 aa).

Residues Gly34, Tyr65, Trp127, and Asn180 each coordinate substrate. Lys243 bears the N6-(pyridoxal phosphate)lysine mark. Arg371 contributes to the substrate binding site.

The protein belongs to the class-I pyridoxal-phosphate-dependent aminotransferase family. As to quaternary structure, homodimer. The cofactor is pyridoxal 5'-phosphate.

The protein localises to the cytoplasm. It carries out the reaction an aromatic L-alpha-amino acid + 2-oxoglutarate = an aromatic oxo-acid + L-glutamate. Functionally, shows activities toward both dicarboxylic and aromatic substrates. In Paracoccus denitrificans, this protein is Aromatic-amino-acid aminotransferase (tyrB).